The chain runs to 306 residues: Acetyl-coenzyme A carboxylase carboxyl transferase subunit beta (306 aa).

The region spanning 25 to 294 (LWIKDPTSGE…AVNPSNPSPT (270 aa)) is the CoA carboxyltransferase N-terminal domain. Positions 286-306 (VNPSNPSPTDSQPPLSKAEAA) are disordered. Over residues 287 to 299 (NPSNPSPTDSQPP) the composition is skewed to polar residues.

This sequence belongs to the AccD/PCCB family. As to quaternary structure, acetyl-CoA carboxylase is a heterohexamer composed of biotin carboxyl carrier protein (AccB), biotin carboxylase (AccC) and two subunits each of ACCase subunit alpha (AccA) and ACCase subunit beta (AccD).

Its subcellular location is the cytoplasm. It carries out the reaction N(6)-carboxybiotinyl-L-lysyl-[protein] + acetyl-CoA = N(6)-biotinyl-L-lysyl-[protein] + malonyl-CoA. Its pathway is lipid metabolism; malonyl-CoA biosynthesis; malonyl-CoA from acetyl-CoA: step 1/1. Component of the acetyl coenzyme A carboxylase (ACC) complex. Biotin carboxylase (BC) catalyzes the carboxylation of biotin on its carrier protein (BCCP) and then the CO(2) group is transferred by the transcarboxylase to acetyl-CoA to form malonyl-CoA. The polypeptide is Acetyl-coenzyme A carboxylase carboxyl transferase subunit beta (Bartonella quintana (strain Toulouse) (Rochalimaea quintana)).